The chain runs to 737 residues: uncharacterized protein (737 aa).

Transmembrane regions (helical) follow at residues 11 to 31 (LSLL…LRPL), 36 to 56 (ETKH…LTFF), 60 to 80 (WFVT…ILFY), 118 to 138 (TLLF…WVIY), 142 to 162 (ILFF…FTPY), 164 to 184 (ATFA…LLYL), and 200 to 220 (VLKW…FGLA). The disordered stretch occupies residues 556-611 (PAQFTSSDTKDSGSDSSSSPKKAKEKQKEEKKQPQKEEKQKEKREPAVSKKPSASH). Positions 581-603 (KQKEEKKQPQKEEKQKEKREPAV) are enriched in basic and acidic residues. A helical transmembrane segment spans residues 618–638 (LYAALAVLAVLLVAAVLLYVF).

It localises to the cell membrane. This is an uncharacterized protein from Bacillus subtilis (strain 168).